A 754-amino-acid chain; its full sequence is Elongation factor G-1, mitochondrial (754 aa).

Residues 1 to 17 (MARFPTSPAPNRLLRLF) constitute a mitochondrion transit peptide. One can recognise a tr-type G domain in the interval 63 to 340 (DKLRNIGISA…GVVSFLPSPN (278 aa)). Residues 72–79 (AHIDSGKT), 139–143 (DTPGH), and 193–196 (NKLD) contribute to the GTP site.

Belongs to the TRAFAC class translation factor GTPase superfamily. Classic translation factor GTPase family. EF-G/EF-2 subfamily. As to expression, expressed in cotyledons and adult leaves at the same levels.

Its subcellular location is the mitochondrion. Its pathway is protein biosynthesis; polypeptide chain elongation. Functionally, mitochondrial GTPase that catalyzes the GTP-dependent ribosomal translocation step during translation elongation. During this step, the ribosome changes from the pre-translocational (PRE) to the post-translocational (POST) state as the newly formed A-site-bound peptidyl-tRNA and P-site-bound deacylated tRNA move to the P and E sites, respectively. Catalyzes the coordinated movement of the two tRNA molecules, the mRNA and conformational changes in the ribosome. This chain is Elongation factor G-1, mitochondrial (MEFG1), found in Arabidopsis thaliana (Mouse-ear cress).